Here is a 409-residue protein sequence, read N- to C-terminus: O-glucosyltransferase rumi (409 aa).

A signal peptide spans 1–20; the sequence is MLINVVLIILLVGLNGKASG. Intrachain disulfides connect Cys-62-Cys-73, Cys-71-Cys-376, Cys-118-Cys-124, and Cys-280-Cys-303. Residue Asp-149 is the Proton donor/acceptor of the active site. Residues 190 to 195 are interaction with the consensus sequence C-X-S-X-[PA]-C in peptide substrates; that stretch reads ATKLHP. Residues 227-231, Arg-235, 274-276, and 292-296 contribute to the UDP-alpha-D-glucose site; these read RGSRT, VSF, and AASFR. A Prevents secretion from ER motif is present at residues 406-409; that stretch reads KDEL.

Belongs to the glycosyltransferase 90 family.

The protein resides in the endoplasmic reticulum lumen. It participates in protein modification; protein glycosylation. Functionally, protein O-glucosyltransferase. Catalyzes the reaction that attaches glucose through an O-glycosidic linkage to a conserved serine residue found in the consensus sequence C-X-S-X-[PA]-C in epidermal growth factor-like repeats. Regulates Notch signaling by glucosylating Notch in the ER, glucosylation is required for the correct folding and cleavage of Notch. In Drosophila pseudoobscura pseudoobscura (Fruit fly), this protein is O-glucosyltransferase rumi.